Here is a 164-residue protein sequence, read N- to C-terminus: Low molecular weight protein-tyrosine-phosphatase (164 aa).

The Nucleophile role is filled by Cys9. The active site involves Arg15. Catalysis depends on Asp128, which acts as the Proton donor.

The protein belongs to the low molecular weight phosphotyrosine protein phosphatase family.

It carries out the reaction O-phospho-L-tyrosyl-[protein] + H2O = L-tyrosyl-[protein] + phosphate. Its function is as follows. Acts on tyrosine phosphorylated proteins, low-MW aryl phosphates and natural and synthetic acyl phosphates. May be involved in the regulation of sulfur amino acid metabolism. The sequence is that of Low molecular weight protein-tyrosine-phosphatase (ptpA) from Streptomyces coelicolor (strain ATCC BAA-471 / A3(2) / M145).